An 879-amino-acid chain; its full sequence is Protein P (879 aa).

Residues 1–184 are terminal protein domain (TP); it reads MHPFSRLFRN…GKPYSWEHRQ (184 aa). A spacer region spans residues 185-382; sequence LVQHNGQQHK…YCIHHIVSSI (198 aa). The disordered stretch occupies residues 304–345; sequence SASNSNKSRSREKAYSSNSTSKRYSPPLNYEKSDFSSPGVRG. The polymerase/reverse transcriptase domain (RT) stretch occupies residues 383–724; that stretch reads DDWGPCTVTG…YEELWPVVRQ (342 aa). A Reverse transcriptase domain is found at 393–634; that stretch reads DVTIKSPRTP…NHLHFMGYVI (242 aa). Mg(2+)-binding residues include Asp465, Asp585, and Asp586.

Belongs to the hepadnaviridae P protein family.

The catalysed reaction is DNA(n) + a 2'-deoxyribonucleoside 5'-triphosphate = DNA(n+1) + diphosphate. It carries out the reaction Endonucleolytic cleavage to 5'-phosphomonoester.. Its activity is regulated as follows. Activated by host HSP70 and HSP40 in vitro to be able to bind the epsilon loop of the pgRNA. Because deletion of the RNase H region renders the protein partly chaperone-independent, the chaperones may be needed indirectly to relieve occlusion of the RNA-binding site by this domain. Inhibited by several reverse-transcriptase inhibitors: Lamivudine, Adefovir and Entecavir. In terms of biological role, multifunctional enzyme that converts the viral RNA genome into dsDNA in viral cytoplasmic capsids. This enzyme displays a DNA polymerase activity that can copy either DNA or RNA templates, and a ribonuclease H (RNase H) activity that cleaves the RNA strand of RNA-DNA heteroduplexes in a partially processive 3'- to 5'-endonucleasic mode. Neo-synthesized pregenomic RNA (pgRNA) are encapsidated together with the P protein, and reverse-transcribed inside the nucleocapsid. Initiation of reverse-transcription occurs first by binding the epsilon loop on the pgRNA genome, and is initiated by protein priming, thereby the 5'-end of (-)DNA is covalently linked to P protein. Partial (+)DNA is synthesized from the (-)DNA template and generates the relaxed circular DNA (RC-DNA) genome. After budding and infection, the RC-DNA migrates in the nucleus, and is converted into a plasmid-like covalently closed circular DNA (cccDNA). The activity of P protein does not seem to be necessary for cccDNA generation, and is presumably released from (+)DNA by host nuclear DNA repair machinery. The protein is Protein P of Woodchuck hepatitis B virus (isolate 1) (WHV).